Consider the following 307-residue polypeptide: Ribonuclease Z (307 aa).

Zn(2+)-binding residues include H62, H64, D66, H67, H139, D210, and H268. D66 serves as the catalytic Proton acceptor.

This sequence belongs to the RNase Z family. Homodimer. Requires Zn(2+) as cofactor.

The enzyme catalyses Endonucleolytic cleavage of RNA, removing extra 3' nucleotides from tRNA precursor, generating 3' termini of tRNAs. A 3'-hydroxy group is left at the tRNA terminus and a 5'-phosphoryl group is left at the trailer molecule.. Zinc phosphodiesterase, which displays some tRNA 3'-processing endonuclease activity. Probably involved in tRNA maturation, by removing a 3'-trailer from precursor tRNA. This is Ribonuclease Z from Myxococcus xanthus (strain DK1622).